Reading from the N-terminus, the 206-residue chain is NADH-quinone oxidoreductase subunit C (206 aa).

The protein belongs to the complex I 30 kDa subunit family. In terms of assembly, NDH-1 is composed of 14 different subunits. Subunits NuoB, C, D, E, F, and G constitute the peripheral sector of the complex.

The protein resides in the cell inner membrane. The enzyme catalyses a quinone + NADH + 5 H(+)(in) = a quinol + NAD(+) + 4 H(+)(out). In terms of biological role, NDH-1 shuttles electrons from NADH, via FMN and iron-sulfur (Fe-S) centers, to quinones in the respiratory chain. The immediate electron acceptor for the enzyme in this species is believed to be ubiquinone. Couples the redox reaction to proton translocation (for every two electrons transferred, four hydrogen ions are translocated across the cytoplasmic membrane), and thus conserves the redox energy in a proton gradient. This Bordetella avium (strain 197N) protein is NADH-quinone oxidoreductase subunit C.